The primary structure comprises 135 residues: Small ribosomal subunit protein uS11 (135 aa).

This sequence belongs to the universal ribosomal protein uS11 family. In terms of assembly, part of the 30S ribosomal subunit. Interacts with proteins S7 and S18. Binds to IF-3.

In terms of biological role, located on the platform of the 30S subunit, it bridges several disparate RNA helices of the 16S rRNA. Forms part of the Shine-Dalgarno cleft in the 70S ribosome. In Cutibacterium acnes (strain DSM 16379 / KPA171202) (Propionibacterium acnes), this protein is Small ribosomal subunit protein uS11.